We begin with the raw amino-acid sequence, 1210 residues long: Adenine-specific methyltransferase PglX (1210 aa).

Over residues 1181-1194 the composition is skewed to basic and acidic residues; it reads KQGEHGLTDDDLRG. Positions 1181–1210 are disordered; that stretch reads KQGEHGLTDDDLRGWRPPAATRRRRAAAKQ. Over residues 1201–1210 the composition is skewed to basic residues; that stretch reads TRRRRAAAKQ.

Belongs to the methyltransferase superfamily. PglX adenine methyltransferase family.

The catalysed reaction is a 2'-deoxyadenosine in DNA + S-adenosyl-L-methionine = an N(6)-methyl-2'-deoxyadenosine in DNA + S-adenosyl-L-homocysteine + H(+). Functionally, BREX systems (bacteriophage exclusion) provide immunity against bacteriophage. Part of a type 2 BREX system. Probably a DNA methyltransferase, it methylates phage DNA in vitro in an S-adenosyl-L-methionine-dependent manner. Previously called the phage growth limitation (Pgl) system, it confers protection against bacteriophage phiC31. The bacteria allows one cycle of phage infection, but subsequent cycles are impaired, protecting the original bacterial colony. The system undergoes high rates (10(-3) to 10(-4)) of phase reversion, i.e. loss and regain of phiC31 resistance. When the pglW-pglX-pglY-pglZ genes are transformed into a susceptible S.lividans (strain 1326) they confer resistance to infection by phage phiC31 and phiBT1; all 4 genes are necessary. Probably a toxic component of a type II toxin-antitoxin (TA) system. The toxic activity is inhibited by its cognate antitoxin PglZ. In terms of biological role, may be a subtypes G and alpha restriction enzyme that recognizes and cleaves an unknown sequence. Methylates an adenine residue in the same sequence. The protein is Adenine-specific methyltransferase PglX of Streptomyces coelicolor (strain ATCC BAA-471 / A3(2) / M145).